We begin with the raw amino-acid sequence, 156 residues long: NADH-ubiquinone oxidoreductase 20 kDa subunit (156 aa).

Residues cysteine 33, cysteine 34, cysteine 98, and cysteine 128 each contribute to the [4Fe-4S] cluster site.

The protein belongs to the complex I 20 kDa subunit family. [4Fe-4S] cluster is required as a cofactor.

It is found in the mitochondrion. It catalyses the reaction a ubiquinone + NADH + 5 H(+)(in) = a ubiquinol + NAD(+) + 4 H(+)(out). The chain is NADH-ubiquinone oxidoreductase 20 kDa subunit (NAD10) from Paramecium tetraurelia.